The chain runs to 292 residues: MKLAIYGKGGIGKSTTSCNISIALARRGKRVLQIGCDPKHDSTFTLTGFLIPTIIDTLQIKDYHYEDVWPEDVIHKGYGGVDRVEAGGPPAGAGCGGYVVGETVKLSKELNAFYEYDIILFDVLGDAVRGGFASPLNYADYCIIIADNGFDALLATNRIAASVREKARTRTHPLRLAGLVGNRTSERDLIDKYVEVCPMPILEILPLIEDIRVSRIKGKTLFEMVESQPYLNYVCDFYLNTADQILSKPEGIIPKEISDRELFSLLSDFYLNPVGNEEQENKENLLDSVVLI.

Residues 10–15 (GIGKST) and Lys39 each bind ATP. Residue Ser14 coordinates Mg(2+). Residue Cys95 participates in [4Fe-4S] cluster binding. 182 to 183 (NR) is an ATP binding site.

It belongs to the NifH/BchL/ChlL family. As to quaternary structure, homodimer. Protochlorophyllide reductase is composed of three subunits; ChlL, ChlN and ChlB. [4Fe-4S] cluster serves as cofactor.

It is found in the plastid. The protein resides in the chloroplast. It carries out the reaction chlorophyllide a + oxidized 2[4Fe-4S]-[ferredoxin] + 2 ADP + 2 phosphate = protochlorophyllide a + reduced 2[4Fe-4S]-[ferredoxin] + 2 ATP + 2 H2O. The protein operates within porphyrin-containing compound metabolism; chlorophyll biosynthesis (light-independent). Functionally, component of the dark-operative protochlorophyllide reductase (DPOR) that uses Mg-ATP and reduced ferredoxin to reduce ring D of protochlorophyllide (Pchlide) to form chlorophyllide a (Chlide). This reaction is light-independent. The L component serves as a unique electron donor to the NB-component of the complex, and binds Mg-ATP. The polypeptide is Light-independent protochlorophyllide reductase iron-sulfur ATP-binding protein (Huperzia lucidula (Shining clubmoss)).